Consider the following 359-residue polypeptide: Nicotinate-nucleotide--dimethylbenzimidazole phosphoribosyltransferase (359 aa).

Glu318 (proton acceptor) is an active-site residue.

The protein belongs to the CobT family. In terms of assembly, homodimer.

It catalyses the reaction 5,6-dimethylbenzimidazole + nicotinate beta-D-ribonucleotide = alpha-ribazole 5'-phosphate + nicotinate + H(+). It participates in nucleoside biosynthesis; alpha-ribazole biosynthesis; alpha-ribazole from 5,6-dimethylbenzimidazole: step 1/2. Its function is as follows. Catalyzes the synthesis of alpha-ribazole-5'-phosphate from nicotinate mononucleotide (NAMN) and 5,6-dimethylbenzimidazole (DMB). This chain is Nicotinate-nucleotide--dimethylbenzimidazole phosphoribosyltransferase, found in Escherichia coli O81 (strain ED1a).